We begin with the raw amino-acid sequence, 209 residues long: Ion-translocating oxidoreductase complex subunit G (209 aa).

The helical transmembrane segment at glycine 9–leucine 29 threads the bilayer. At threonine 175 the chain carries FMN phosphoryl threonine.

This sequence belongs to the RnfG family. The complex is composed of six subunits: RnfA, RnfB, RnfC, RnfD, RnfE and RnfG. Requires FMN as cofactor.

It is found in the cell inner membrane. In terms of biological role, part of a membrane-bound complex that couples electron transfer with translocation of ions across the membrane. This chain is Ion-translocating oxidoreductase complex subunit G, found in Yersinia pestis.